Here is a 444-residue protein sequence, read N- to C-terminus: Ribulose bisphosphate carboxylase large chain (444 aa).

Lysine 5 carries the N6,N6,N6-trimethyllysine modification. Substrate-binding residues include asparagine 114 and threonine 164. The active-site Proton acceptor is the lysine 166. Position 168 (lysine 168) interacts with substrate. 3 residues coordinate Mg(2+): lysine 192, aspartate 194, and glutamate 195. At lysine 192 the chain carries N6-carboxylysine. Histidine 285 functions as the Proton acceptor in the catalytic mechanism. Residues arginine 286, histidine 318, and serine 370 each coordinate substrate.

Belongs to the RuBisCO large chain family. Type I subfamily. In terms of assembly, heterohexadecamer of 8 large chains and 8 small chains; disulfide-linked. The disulfide link is formed within the large subunit homodimers. Mg(2+) serves as cofactor. The disulfide bond which can form in the large chain dimeric partners within the hexadecamer appears to be associated with oxidative stress and protein turnover.

The protein resides in the plastid. It localises to the chloroplast. The catalysed reaction is 2 (2R)-3-phosphoglycerate + 2 H(+) = D-ribulose 1,5-bisphosphate + CO2 + H2O. It catalyses the reaction D-ribulose 1,5-bisphosphate + O2 = 2-phosphoglycolate + (2R)-3-phosphoglycerate + 2 H(+). In terms of biological role, ruBisCO catalyzes two reactions: the carboxylation of D-ribulose 1,5-bisphosphate, the primary event in carbon dioxide fixation, as well as the oxidative fragmentation of the pentose substrate in the photorespiration process. Both reactions occur simultaneously and in competition at the same active site. This Ginkgo biloba (Ginkgo) protein is Ribulose bisphosphate carboxylase large chain.